A 379-amino-acid chain; its full sequence is Cytochrome b (379 aa).

4 helical membrane passes run 33-53 (FGSL…FLAM), 77-98 (WLIR…YLHI), 113-133 (WNIG…GYVL), and 178-198 (FFAF…IHLL). The heme b site is built by His83 and His97. 2 residues coordinate heme b: His182 and His196. His201 is an a ubiquinone binding site. A run of 4 helical transmembrane segments spans residues 226–246 (YKDL…ALFY), 288–308 (LGGV…PILH), 320–340 (ASQL…WIGG), and 347–367 (YIII…VLNP).

The protein belongs to the cytochrome b family. The cytochrome bc1 complex contains 3 respiratory subunits (MT-CYB, CYC1 and UQCRFS1), 2 core proteins (UQCRC1 and UQCRC2) and probably 6 low-molecular weight proteins. Requires heme b as cofactor.

It localises to the mitochondrion inner membrane. In terms of biological role, component of the ubiquinol-cytochrome c reductase complex (complex III or cytochrome b-c1 complex) that is part of the mitochondrial respiratory chain. The b-c1 complex mediates electron transfer from ubiquinol to cytochrome c. Contributes to the generation of a proton gradient across the mitochondrial membrane that is then used for ATP synthesis. This Anguilla dieffenbachii (New Zealand longfin eel) protein is Cytochrome b (mt-cyb).